The sequence spans 417 residues: MLKREMNIADYDAELWQAMEQEKVRQEEHIELIASENYTSPRVMQAQGSQLTNKYAEGYPGKRYYGGCEYVDIVEQLAIDRAKELFGADYANVQPHSGSQANFAVYTALLQPGDTVLGMNLAQGGHLTHGSPVNFSGKLYNIIPYGIDASGKIDYDDMAKQAQEHKPKMIIGGFSAYSGVVDWARMREIADSIGAYLFVDMAHVAGLIAAGVYPNPVPHAHVVTTTTHKTLAGPRGGLILAKGGDEDLYKKLNSAVFPSAQGGPLMHVIAAKAVALKEAMEPEFKVYQQQVAKNAKAMVEVFLNRGYKVVSGGTENHLFLLDLVDKNLTGKEADAALGRANITVNKNSVPNDPKSPFVTSGIRIGSPAVTRRGFKEAEVKELAGWMCDVLDNINDEATIERVKTKVLDICARFPVYA.

Residues Leu-121 and 125-127 (GHL) each bind (6S)-5,6,7,8-tetrahydrofolate. At Lys-229 the chain carries N6-(pyridoxal phosphate)lysine. A (6S)-5,6,7,8-tetrahydrofolate-binding site is contributed by 355-357 (SPF).

This sequence belongs to the SHMT family. As to quaternary structure, homodimer. The cofactor is pyridoxal 5'-phosphate.

Its subcellular location is the cytoplasm. It catalyses the reaction (6R)-5,10-methylene-5,6,7,8-tetrahydrofolate + glycine + H2O = (6S)-5,6,7,8-tetrahydrofolate + L-serine. The protein operates within one-carbon metabolism; tetrahydrofolate interconversion. It participates in amino-acid biosynthesis; glycine biosynthesis; glycine from L-serine: step 1/1. Its function is as follows. Catalyzes the reversible interconversion of serine and glycine with tetrahydrofolate (THF) serving as the one-carbon carrier. This reaction serves as the major source of one-carbon groups required for the biosynthesis of purines, thymidylate, methionine, and other important biomolecules. Also exhibits THF-independent aldolase activity toward beta-hydroxyamino acids, producing glycine and aldehydes, via a retro-aldol mechanism. This chain is Serine hydroxymethyltransferase, found in Salmonella arizonae (strain ATCC BAA-731 / CDC346-86 / RSK2980).